Here is a 92-residue protein sequence, read N- to C-terminus: Transcription factor S4 (92 aa).

The tract at residues 1–31 (MRFCPKCGSFLKVKGNKMVCSKCGYSDHDVE) is ZR-N. Residues Cys4, Cys7, Cys20, and Cys23 each coordinate Zn(2+). The segment at 32–56 (KVILKENVAHENDKTIIADGETIEG) is flexible linker. The segment at 55–92 (EGRVAISLCPRCGSVRAILLNKKKRLYRCMTCNFVYNI) is ZR-C. Zn(2+)-binding residues include Cys63 and Cys66. Residues Lys76, Lys77, and Lys78 contribute to the active site. Zn(2+) is bound by residues Cys83 and Cys86.

The protein belongs to the archaeal RpoM/eukaryotic RPA12/RPB9/RPC11 RNA polymerase family. As to quaternary structure, interacts with RNA polymerase. It depends on Zn(2+) as a cofactor.

Functionally, a potent inhibitor of RNA polymerase (RNAP) probably involved in viral defense. Destabilizes the transcription pre-initiation complex of TBP, TFB, DNA and RNAP, inhibits abortive transcription initiation, productive initiation and transcription elongation. Increases the RNAP KM for NTPs about 50-fold. Overexpression of TFS1-tip4 (TFS1 with the active tip of this protein, phenocopies this protein) in S.acidocaldarius MW001 leads to severe growth inhibition. When bound to RNAP induces conformational changes that widen the DNA-binding channel, probably destabilizing the interaction of DNA with RNAP. The chain is Transcription factor S4 from Saccharolobus solfataricus (strain ATCC 35092 / DSM 1617 / JCM 11322 / P2) (Sulfolobus solfataricus).